Consider the following 243-residue polypeptide: Lipid II isoglutaminyl synthase (glutamine-hydrolyzing) subunit GatD (243 aa).

The GATase cobBQ-type domain occupies 6-197 (IYHFMSDKLN…LHGPILPKNY (192 aa)). The active-site Nucleophile is Cys-94. Residue Arg-128 coordinates substrate. His-189 is a catalytic residue.

This sequence belongs to the CobB/CobQ family. GatD subfamily. In terms of assembly, forms a heterodimer with MurT.

The enzyme catalyses beta-D-GlcNAc-(1-&gt;4)-Mur2Ac(oyl-L-Ala-gamma-D-Glu-L-Lys-D-Ala-D-Ala)-di-trans,octa-cis-undecaprenyl diphosphate + L-glutamine + ATP + H2O = beta-D-GlcNAc-(1-&gt;4)-Mur2Ac(oyl-L-Ala-D-isoglutaminyl-L-Lys-D-Ala-D-Ala)-di-trans,octa-cis-undecaprenyl diphosphate + L-glutamate + ADP + phosphate + H(+). The catalysed reaction is L-glutamine + H2O = L-glutamate + NH4(+). It functions in the pathway cell wall biogenesis; peptidoglycan biosynthesis. Functionally, the lipid II isoglutaminyl synthase complex catalyzes the formation of alpha-D-isoglutamine in the cell wall lipid II stem peptide. The GatD subunit catalyzes the hydrolysis of glutamine to glutamate and ammonia. The resulting ammonia molecule is channeled to the active site of MurT. The polypeptide is Lipid II isoglutaminyl synthase (glutamine-hydrolyzing) subunit GatD (Staphylococcus aureus (strain N315)).